A 61-amino-acid chain; its full sequence is uncharacterized protein (61 aa).

This is an uncharacterized protein from Homo sapiens (Human).